We begin with the raw amino-acid sequence, 109 residues long: Nucleoid-associated protein Ldb1634 (109 aa).

Residues 18-40 (MMKQAKKLQEQMAQEQENITTQE) are disordered.

Belongs to the YbaB/EbfC family. Homodimer.

The protein localises to the cytoplasm. It localises to the nucleoid. Its function is as follows. Binds to DNA and alters its conformation. May be involved in regulation of gene expression, nucleoid organization and DNA protection. The protein is Nucleoid-associated protein Ldb1634 of Lactobacillus delbrueckii subsp. bulgaricus (strain ATCC 11842 / DSM 20081 / BCRC 10696 / JCM 1002 / NBRC 13953 / NCIMB 11778 / NCTC 12712 / WDCM 00102 / Lb 14).